A 617-amino-acid polypeptide reads, in one-letter code: Neurosecretory protein VGF (617 aa).

Positions 1-23 (MKTFTLPASVLFCFLLLIQGLGA) are cleaved as a signal peptide. Disordered regions lie at residues 29–75 (PDVF…GELF), 93–204 (RPAS…ESPG), and 239–262 (SESA…THLG). Over residues 48–64 (AVSRPKDDGVPEVRAAR) the composition is skewed to basic and acidic residues. Residues 149–160 (DPEEDDRSEELE) are compositionally biased toward acidic residues. Positions 182-197 (ETAAAETETRTHTLTR) are enriched in low complexity. Gln-313 is subject to Pyrrolidone carboxylic acid. The segment covering 345–364 (RQRDLGGRELQETQQERENE) has biased composition (basic and acidic residues). The disordered stretch occupies residues 345 to 599 (RQRDLGGREL…EEADAEERRL (255 aa)). The span at 378–397 (EDDVGEEDEEAAEAEAEAEE) shows a compositional bias: acidic residues. The segment covering 418–436 (AEDKRSQEEAPGHRRKDAE) has biased composition (basic and acidic residues). Ser-423 is modified (phosphoserine). Acidic residues predominate over residues 437–452 (GAEEGGEEDDDDEEMD). The segment covering 491 to 501 (PPEPVPPPRAA) has biased composition (pro residues). Positions 577–599 (HHPDLEAQARRAQEEADAEERRL) are enriched in basic and acidic residues.

Interacts with HSPA8 on cell membrane. Interacts with C3AR1. Interacts with C1QBP.

The protein resides in the secreted. It is found in the cytoplasmic vesicle. The protein localises to the secretory vesicle. Its function is as follows. Secreted polyprotein that is packaged and proteolytically processed by prohormone convertases PCSK1 and PCSK2 in a cell-type-specific manner. VGF and peptides derived from its processing play many roles in neurogenesis and neuroplasticity associated with learning, memory, depression and chronic pain. In terms of biological role, plays a role in the control of body fluid homeostasis by regulating vasopressin release. Suppresses presynaptic glutamatergic neurons connected to vasopressin neurons. Functionally, plays a role in the control of body fluid homeostasis by regulating vasopressin release. Activates GABAergic interneurons which are inhibitory neurons of the nervous system and thereby suppresses presynaptic glutamatergic neurons. Also stimulates feeding behavior in an orexin-dependent manner in the hypothalamus. Functions as a positive regulator for the activation of orexin neurons resulting in elevated gastric acid secretion and gastric emptying. Secreted multifunctional peptide that interacts with different receptors and thereby plays multiple physiological roles including modulation of energy expenditure, pain, response to stress, gastric regulation as well as lipolysis. Activates the G-protein-coupled receptor C3AR1 via a folding-upon-binding mechanism leading to enhanced lipolysis in adipocytes. Interacts with gC1qR receptor in macrophages and microglia causing increased levels of intracellular calcium and hypersensitivity. Its function is as follows. Plays a role in the regulation of memory formation and depression-related behaviors potentially by influencing synaptic plasticity and neurogenesis. Induces acute and transient activation of the NTRK2/TRKB receptor and subsequent CREB phosphorylation. Also induces insulin secretion in insulinoma cells by increasing intracellular calcium mobilization. The polypeptide is Neurosecretory protein VGF (Mus musculus (Mouse)).